The sequence spans 324 residues: Pepsin-2B (324 aa).

The region spanning 14-321 (YYGVISIGTP…DRTNNKVGFA (308 aa)) is the Peptidase A1 domain. D32 is an active-site residue. C45 and C50 are oxidised to a cystine. Positions 86–109 (QDTVSVGGGSDPNQELGESQTEPG) are disordered. Positions 96 to 107 (DPNQELGESQTE) are enriched in polar residues. C206 and C209 are disulfide-bonded. D214 is an active-site residue. C247 and C280 are oxidised to a cystine.

Belongs to the peptidase A1 family.

The chain is Pepsin-2B from Gadus morhua (Atlantic cod).